The chain runs to 514 residues: Monocarboxylate transporter 10 (514 aa).

Positions 1-64 (MVPSQEEPAA…TGNQEPPEPP (64 aa)) are disordered. The Cytoplasmic portion of the chain corresponds to 1–65 (MVPSQEEPAA…GNQEPPEPPE (65 aa)). A helical membrane pass occupies residues 66–86 (GGWGWLVMLAAMWCNGSVFGI). Over 87-113 (QNAYGVLFVSMLETFGAKDDDNMAFKA) the chain is Extracellular. Residues 114–134 (AWVGSLSMGMIFFCCPIVSVF) form a helical membrane-spanning segment. Topologically, residues 135-143 (TDMFGCRRT) are cytoplasmic. A helical transmembrane segment spans residues 144-164 (AVLGAAVGFVGLMSSSFVSSI). The Extracellular segment spans residues 165 to 170 (EPLYFT). Residues 171 to 191 (YGVVFACGCSFAYQPSLVILG) form a helical membrane-spanning segment. Over 192–199 (HYFKKRLG) the chain is Cytoplasmic. Residues 200 to 220 (LVNGIVTAGSSVFTILLPLLL) form a helical membrane-spanning segment. Residues 221–227 (GNLTSTV) are Extracellular-facing. Residues 228 to 248 (GLCYTLRILCIFMFVLFLAGF) traverse the membrane as a helical segment. Residues 249–290 (TYRPLVPSSKEKESEDSRSSFFSRRKLSPPKKIFNFALFKET) are Cytoplasmic-facing. Ser262 carries the phosphoserine modification. The helical transmembrane segment at 291–311 (AYAVWAAGIPLALFGYFVPYV) threads the bilayer. At 312–328 (HLMNHVKERFKDVNNKE) the chain is on the extracellular side. A helical membrane pass occupies residues 329–349 (VLFMCIGVTSGVGRLLFGRIA). Asp350 is a topological domain (cytoplasmic). A helical transmembrane segment spans residues 351–371 (YLPGVKKVYLQVLSFFFIGLT). The Extracellular segment spans residues 372-395 (SMMIPLCSVFGALIALCLIMGLFD). A helical membrane pass occupies residues 396–416 (GCFISIMAPIAFELVGPQDAS). The Cytoplasmic segment spans residues 417-418 (QA). Residues 419–439 (IGFLLGFMSIPMTVGPPVAGL) form a helical membrane-spanning segment. At 440–450 (LHDKLGSYDLA) the chain is on the extracellular side. Residues 451 to 471 (FYLAGIPPFIGGAVLCLIPWI) traverse the membrane as a helical segment. The Cytoplasmic segment spans residues 472 to 514 (HSKKQREISKNTGGEKMEKMLANQSSLLSSSSGIFKKESDSII). Phosphoserine is present on residues Ser497, Ser500, Ser502, and Ser503.

It belongs to the major facilitator superfamily. Monocarboxylate porter (TC 2.A.1.13) family. Not N-glycosylated. Strongly expressed in intestine, placenta and liver. In small intestine is detected in the basolateral membrane (at protein level).

The protein localises to the cell membrane. It localises to the basolateral cell membrane. The enzyme catalyses L-tryptophan(in) = L-tryptophan(out). It catalyses the reaction L-tyrosine(in) = L-tyrosine(out). The catalysed reaction is L-phenylalanine(in) = L-phenylalanine(out). It carries out the reaction 3,3',5-triiodo-L-thyronine(out) = 3,3',5-triiodo-L-thyronine(in). The enzyme catalyses L-thyroxine(out) = L-thyroxine(in). Functionally, sodium- and proton-independent thyroid hormones and aromatic acids transporter. Mediates both uptake and efflux of 3,5,3'-triiodothyronine (T3) and 3,5,3',5'-tetraiodothyronine (T4) with high affinity, suggesting a role in the homeostasis of thyroid hormone levels. Responsible for low affinity bidirectional transport of the aromatic amino acids, such as phenylalanine, tyrosine, tryptophan and L-3,4-dihydroxyphenylalanine (L-dopa). Plays an important role in homeostasis of aromatic amino acids. The protein is Monocarboxylate transporter 10 (Slc16a10) of Rattus norvegicus (Rat).